The sequence spans 118 residues: Large ribosomal subunit protein bL20 (118 aa).

Belongs to the bacterial ribosomal protein bL20 family.

In terms of biological role, binds directly to 23S ribosomal RNA and is necessary for the in vitro assembly process of the 50S ribosomal subunit. It is not involved in the protein synthesizing functions of that subunit. The polypeptide is Large ribosomal subunit protein bL20 (Thermotoga petrophila (strain ATCC BAA-488 / DSM 13995 / JCM 10881 / RKU-1)).